The primary structure comprises 326 residues: Adenosine receptor A1 (326 aa).

Residues Met1–Ala10 lie on the Extracellular side of the membrane. Residues Ala11–Ala33 form a helical membrane-spanning segment. Residues Val34–Cys46 lie on the Cytoplasmic side of the membrane. A helical membrane pass occupies residues Phe47 to Ile69. Topologically, residues Asn70–Cys80 are extracellular. Cysteines 80 and 169 form a disulfide. The helical transmembrane segment at Leu81–Ala102 threads the bilayer. Topologically, residues Val103 to Arg123 are cytoplasmic. A helical membrane pass occupies residues Ala124–Trp146. Over Asn147–Ser176 the chain is Extracellular. Residues Asn148 and Asn159 are each glycosylated (N-linked (GlcNAc...) asparagine). A helical membrane pass occupies residues Met177–Met201. Residues Glu202 to Ser235 are Cytoplasmic-facing. Residues Leu236 to Phe259 form a helical membrane-spanning segment. At Cys260–Arg267 the chain is on the extracellular side. A helical membrane pass occupies residues Ile268–Ile292. Over Gln293–Asp326 the chain is Cytoplasmic. Residue Cys309 is the site of S-palmitoyl cysteine attachment.

This sequence belongs to the G-protein coupled receptor 1 family.

Its subcellular location is the cell membrane. In terms of biological role, receptor for adenosine. The activity of this receptor is mediated by G proteins which inhibit adenylyl cyclase. This is Adenosine receptor A1 (ADORA1) from Bos taurus (Bovine).